The following is a 183-amino-acid chain: Adenine phosphoribosyltransferase (183 aa).

This sequence belongs to the purine/pyrimidine phosphoribosyltransferase family. In terms of assembly, homodimer.

Its subcellular location is the cytoplasm. It carries out the reaction AMP + diphosphate = 5-phospho-alpha-D-ribose 1-diphosphate + adenine. It functions in the pathway purine metabolism; AMP biosynthesis via salvage pathway; AMP from adenine: step 1/1. In terms of biological role, catalyzes a salvage reaction resulting in the formation of AMP, that is energically less costly than de novo synthesis. The chain is Adenine phosphoribosyltransferase from Edwardsiella ictaluri (strain 93-146).